A 329-amino-acid chain; its full sequence is Trem-like transcript 2 protein (329 aa).

The N-terminal stretch at 1–24 (MEPWPLTFLLLLLLLLWLQGCVSG) is a signal peptide. Positions 25 to 126 (HSNENLYRKV…HFYPLVGFQL (102 aa)) constitute an Ig-like V-type domain. Topologically, residues 25–270 (HSNENLYRKV…NRSQETYIPA (246 aa)) are extracellular. Intrachain disulfides connect Cys46-Cys110 and Cys61-Cys68. Residues 202-259 (FIDTSGTVTEPERNTESQPATLSPSNARSFSADPVTTSTMSRHQSSSLSTTGTCHPLT) form a disordered region. Positions 217–259 (ESQPATLSPSNARSFSADPVTTSTMSRHQSSSLSTTGTCHPLT) are enriched in polar residues. Asn261 carries N-linked (GlcNAc...) asparagine glycosylation. A helical transmembrane segment spans residues 271 to 291 (MVVVLTFLPAPVVLVVAYGFW). The Cytoplasmic portion of the chain corresponds to 292-329 (KKRHMGRYNLGSNYAKPWIHLPEGPETPWKPAWSKITQ).

In terms of assembly, interacts with CD276 and this interaction enhances T-cell activation. As to expression, detected in B-lymphocytes and macrophages. Detected in spleen, lymph nodes, blood, bone marrow and cells from the peritoneal cavity (at protein level).

The protein localises to the cell membrane. Its function is as follows. Cell surface receptor that may play a role in the innate and adaptive immune response. Acts as a counter-receptor for CD276 and interaction with CD276 on T-cells enhances T-cell activation. The protein is Trem-like transcript 2 protein (Treml2) of Mus musculus (Mouse).